The sequence spans 291 residues: F-box/kelch-repeat protein At5g38670 (291 aa).

Positions 5–51 constitute an F-box domain; sequence TNPNPSLPDDLILSCVARVSRLYYPALSLVSKSFRSLIASPELYKTR. Kelch repeat units lie at residues 46–91, 92–140, 142–187, and 189–232; these read ELYK…VLDE, KIYV…RFDG, LHLV…WYTI, and KGDI…YGGK.

The protein is F-box/kelch-repeat protein At5g38670 of Arabidopsis thaliana (Mouse-ear cress).